The following is a 156-amino-acid chain: Small ribosomal subunit protein uS7 (156 aa).

The protein belongs to the universal ribosomal protein uS7 family. Part of the 30S ribosomal subunit. Contacts proteins S9 and S11.

In terms of biological role, one of the primary rRNA binding proteins, it binds directly to 16S rRNA where it nucleates assembly of the head domain of the 30S subunit. Is located at the subunit interface close to the decoding center, probably blocks exit of the E-site tRNA. The chain is Small ribosomal subunit protein uS7 from Aliivibrio salmonicida (strain LFI1238) (Vibrio salmonicida (strain LFI1238)).